The primary structure comprises 236 residues: Ribose-5-phosphate isomerase A (236 aa).

Substrate-binding positions include 31–34 (TGST), 88–91 (DGAD), and 101–104 (KGGG). Residue Glu-110 is the Proton acceptor of the active site. A substrate-binding site is contributed by Lys-128.

This sequence belongs to the ribose 5-phosphate isomerase family. Homodimer.

It catalyses the reaction aldehydo-D-ribose 5-phosphate = D-ribulose 5-phosphate. It functions in the pathway carbohydrate degradation; pentose phosphate pathway; D-ribose 5-phosphate from D-ribulose 5-phosphate (non-oxidative stage): step 1/1. In terms of biological role, catalyzes the reversible conversion of ribose-5-phosphate to ribulose 5-phosphate. This is Ribose-5-phosphate isomerase A from Thermosynechococcus vestitus (strain NIES-2133 / IAM M-273 / BP-1).